The sequence spans 166 residues: Small ribosomal subunit protein uS5 (166 aa).

The S5 DRBM domain occupies 11–74; it reads LEDRVVAINR…EDAKKNLVEV (64 aa).

This sequence belongs to the universal ribosomal protein uS5 family. Part of the 30S ribosomal subunit. Contacts proteins S4 and S8.

With S4 and S12 plays an important role in translational accuracy. In terms of biological role, located at the back of the 30S subunit body where it stabilizes the conformation of the head with respect to the body. The chain is Small ribosomal subunit protein uS5 from Enterococcus faecalis (strain ATCC 700802 / V583).